We begin with the raw amino-acid sequence, 348 residues long: D-alanine--D-alanine ligase (348 aa).

The ATP-grasp domain maps to 132–334; the sequence is KRVLESAGIA…YPDLIEKLVA (203 aa). 162–217 is an ATP binding site; sequence EEKLSYPVFTKPSNMGSSVGISKSDNQEELRASLDLAFKYDSRVLVEQGVTAREIE. Residues Asp288, Glu301, and Asn303 each coordinate Mg(2+).

It belongs to the D-alanine--D-alanine ligase family. The cofactor is Mg(2+). Mn(2+) serves as cofactor.

It localises to the cytoplasm. The enzyme catalyses 2 D-alanine + ATP = D-alanyl-D-alanine + ADP + phosphate + H(+). Its pathway is cell wall biogenesis; peptidoglycan biosynthesis. Functionally, cell wall formation. The sequence is that of D-alanine--D-alanine ligase from Streptococcus gordonii (strain Challis / ATCC 35105 / BCRC 15272 / CH1 / DL1 / V288).